Here is a 217-residue protein sequence, read N- to C-terminus: Probable transaldolase (217 aa).

Lys83 (schiff-base intermediate with substrate) is an active-site residue.

This sequence belongs to the transaldolase family. Type 3B subfamily.

The protein localises to the cytoplasm. The catalysed reaction is D-sedoheptulose 7-phosphate + D-glyceraldehyde 3-phosphate = D-erythrose 4-phosphate + beta-D-fructose 6-phosphate. Its pathway is carbohydrate degradation; pentose phosphate pathway; D-glyceraldehyde 3-phosphate and beta-D-fructose 6-phosphate from D-ribose 5-phosphate and D-xylulose 5-phosphate (non-oxidative stage): step 2/3. In terms of biological role, transaldolase is important for the balance of metabolites in the pentose-phosphate pathway. The sequence is that of Probable transaldolase from Phenylobacterium zucineum (strain HLK1).